The chain runs to 262 residues: MDGSVRSEDTWTVAGRTFRSRLIVGTGKYKDYAQNAAAAEAAGAEIVTVAVRRVNLSDPSQPMLVDHVKPDRFTFLPNTAGCFTGEDAIRTLRLAREAGGWDLVKLEVLSNTKHLLPDMEETLRALKLLIADGFQVMVYCSDDPVYAKKLEEAGAAAIMPAAAPIGSGRGIQNALNLALIIEQAKVPVLVDAGVGTASDATIAMELGCDAVLMNTAIAEAKDPIRMARAMRHAVIAGREAYLAGRMPKRMYAEPSSPLSGLI.

K105 (schiff-base intermediate with DXP) is an active-site residue. Residues G166, 192 to 193 (AG), and 214 to 215 (NT) contribute to the 1-deoxy-D-xylulose 5-phosphate site.

The protein belongs to the ThiG family. In terms of assembly, homotetramer. Forms heterodimers with either ThiH or ThiS.

It is found in the cytoplasm. It carries out the reaction [ThiS sulfur-carrier protein]-C-terminal-Gly-aminoethanethioate + 2-iminoacetate + 1-deoxy-D-xylulose 5-phosphate = [ThiS sulfur-carrier protein]-C-terminal Gly-Gly + 2-[(2R,5Z)-2-carboxy-4-methylthiazol-5(2H)-ylidene]ethyl phosphate + 2 H2O + H(+). It participates in cofactor biosynthesis; thiamine diphosphate biosynthesis. In terms of biological role, catalyzes the rearrangement of 1-deoxy-D-xylulose 5-phosphate (DXP) to produce the thiazole phosphate moiety of thiamine. Sulfur is provided by the thiocarboxylate moiety of the carrier protein ThiS. In vitro, sulfur can be provided by H(2)S. The polypeptide is Thiazole synthase (Phenylobacterium zucineum (strain HLK1)).